Consider the following 341-residue polypeptide: Phosphoribosylformylglycinamidine cyclo-ligase (341 aa).

Belongs to the AIR synthase family.

The protein localises to the cytoplasm. It carries out the reaction 2-formamido-N(1)-(5-O-phospho-beta-D-ribosyl)acetamidine + ATP = 5-amino-1-(5-phospho-beta-D-ribosyl)imidazole + ADP + phosphate + H(+). Its pathway is purine metabolism; IMP biosynthesis via de novo pathway; 5-amino-1-(5-phospho-D-ribosyl)imidazole from N(2)-formyl-N(1)-(5-phospho-D-ribosyl)glycinamide: step 2/2. The sequence is that of Phosphoribosylformylglycinamidine cyclo-ligase from Caldicellulosiruptor saccharolyticus (strain ATCC 43494 / DSM 8903 / Tp8T 6331).